We begin with the raw amino-acid sequence, 342 residues long: tRNA N6-adenosine threonylcarbamoyltransferase (342 aa).

Fe cation contacts are provided by His-112 and His-116. Residues 134–138 (LASGG), Asp-167, Gly-180, and Asn-280 each bind substrate. Asp-308 contacts Fe cation.

This sequence belongs to the KAE1 / TsaD family. Fe(2+) serves as cofactor.

It is found in the cytoplasm. The enzyme catalyses L-threonylcarbamoyladenylate + adenosine(37) in tRNA = N(6)-L-threonylcarbamoyladenosine(37) in tRNA + AMP + H(+). Its function is as follows. Required for the formation of a threonylcarbamoyl group on adenosine at position 37 (t(6)A37) in tRNAs that read codons beginning with adenine. Is involved in the transfer of the threonylcarbamoyl moiety of threonylcarbamoyl-AMP (TC-AMP) to the N6 group of A37, together with TsaE and TsaB. TsaD likely plays a direct catalytic role in this reaction. This Rickettsia canadensis (strain McKiel) protein is tRNA N6-adenosine threonylcarbamoyltransferase.